The following is a 561-amino-acid chain: Septation ring formation regulator EzrA (561 aa).

Topologically, residues 1 to 3 (MWI) are extracellular. The chain crosses the membrane as a helical span at residues 4-22 (VVFSLLVLTVTFFVYGALR). The Cytoplasmic segment spans residues 23–561 (RKAFYKRVDK…VLEKVQHLAG (539 aa)). Coiled coils occupy residues 98–130 (RFQK…IQVL), 166–214 (AKVF…HLLK), and 251–465 (FAID…KLSD).

This sequence belongs to the EzrA family.

The protein resides in the cell membrane. Functionally, negative regulator of FtsZ ring formation; modulates the frequency and position of FtsZ ring formation. Inhibits FtsZ ring formation at polar sites. Interacts either with FtsZ or with one of its binding partners to promote depolymerization. The polypeptide is Septation ring formation regulator EzrA (Halalkalibacterium halodurans (strain ATCC BAA-125 / DSM 18197 / FERM 7344 / JCM 9153 / C-125) (Bacillus halodurans)).